The sequence spans 275 residues: 2,3,4,5-tetrahydropyridine-2,6-dicarboxylate N-succinyltransferase (275 aa).

Residues arginine 108 and aspartate 145 each contribute to the substrate site.

It belongs to the transferase hexapeptide repeat family. In terms of assembly, homotrimer.

It is found in the cytoplasm. The enzyme catalyses (S)-2,3,4,5-tetrahydrodipicolinate + succinyl-CoA + H2O = (S)-2-succinylamino-6-oxoheptanedioate + CoA. It functions in the pathway amino-acid biosynthesis; L-lysine biosynthesis via DAP pathway; LL-2,6-diaminopimelate from (S)-tetrahydrodipicolinate (succinylase route): step 1/3. The polypeptide is 2,3,4,5-tetrahydropyridine-2,6-dicarboxylate N-succinyltransferase (Roseobacter denitrificans (strain ATCC 33942 / OCh 114) (Erythrobacter sp. (strain OCh 114))).